A 235-amino-acid chain; its full sequence is Peptidyl-tRNA hydrolase (235 aa).

Residue tyrosine 14 coordinates tRNA. Histidine 19 acts as the Proton acceptor in catalysis. Residues phenylalanine 64, asparagine 66, and asparagine 112 each contribute to the tRNA site. Positions 186 to 235 (RTAPPRSSGGSPKTDKPAKATREPPPAAKPEATPEEETRSPLQRLVDKFR) are disordered. A compositionally biased stretch (basic and acidic residues) spans 198 to 207 (KTDKPAKATR).

It belongs to the PTH family. In terms of assembly, monomer.

It is found in the cytoplasm. It carries out the reaction an N-acyl-L-alpha-aminoacyl-tRNA + H2O = an N-acyl-L-amino acid + a tRNA + H(+). Its function is as follows. Hydrolyzes ribosome-free peptidyl-tRNAs (with 1 or more amino acids incorporated), which drop off the ribosome during protein synthesis, or as a result of ribosome stalling. Catalyzes the release of premature peptidyl moieties from peptidyl-tRNA molecules trapped in stalled 50S ribosomal subunits, and thus maintains levels of free tRNAs and 50S ribosomes. The sequence is that of Peptidyl-tRNA hydrolase from Dinoroseobacter shibae (strain DSM 16493 / NCIMB 14021 / DFL 12).